Here is a 290-residue protein sequence, read N- to C-terminus: 4-hydroxy-3-methylbut-2-enyl diphosphate reductase (290 aa).

Residue C12 coordinates [4Fe-4S] cluster. (2E)-4-hydroxy-3-methylbut-2-enyl diphosphate contacts are provided by H50 and H83. 2 residues coordinate dimethylallyl diphosphate: H50 and H83. Residues H50 and H83 each contribute to the isopentenyl diphosphate site. C105 contributes to the [4Fe-4S] cluster binding site. A (2E)-4-hydroxy-3-methylbut-2-enyl diphosphate-binding site is contributed by H133. Dimethylallyl diphosphate is bound at residue H133. Position 133 (H133) interacts with isopentenyl diphosphate. E135 acts as the Proton donor in catalysis. A (2E)-4-hydroxy-3-methylbut-2-enyl diphosphate-binding site is contributed by T173. Residue C202 coordinates [4Fe-4S] cluster. 3 residues coordinate (2E)-4-hydroxy-3-methylbut-2-enyl diphosphate: S230, N232, and S274. Positions 230, 232, and 274 each coordinate dimethylallyl diphosphate. Isopentenyl diphosphate-binding residues include S230, N232, and S274.

It belongs to the IspH family. The cofactor is [4Fe-4S] cluster.

It carries out the reaction isopentenyl diphosphate + 2 oxidized [2Fe-2S]-[ferredoxin] + H2O = (2E)-4-hydroxy-3-methylbut-2-enyl diphosphate + 2 reduced [2Fe-2S]-[ferredoxin] + 2 H(+). It catalyses the reaction dimethylallyl diphosphate + 2 oxidized [2Fe-2S]-[ferredoxin] + H2O = (2E)-4-hydroxy-3-methylbut-2-enyl diphosphate + 2 reduced [2Fe-2S]-[ferredoxin] + 2 H(+). It functions in the pathway isoprenoid biosynthesis; dimethylallyl diphosphate biosynthesis; dimethylallyl diphosphate from (2E)-4-hydroxy-3-methylbutenyl diphosphate: step 1/1. Its pathway is isoprenoid biosynthesis; isopentenyl diphosphate biosynthesis via DXP pathway; isopentenyl diphosphate from 1-deoxy-D-xylulose 5-phosphate: step 6/6. Its function is as follows. Catalyzes the conversion of 1-hydroxy-2-methyl-2-(E)-butenyl 4-diphosphate (HMBPP) into a mixture of isopentenyl diphosphate (IPP) and dimethylallyl diphosphate (DMAPP). Acts in the terminal step of the DOXP/MEP pathway for isoprenoid precursor biosynthesis. This Nitratidesulfovibrio vulgaris (strain DP4) (Desulfovibrio vulgaris) protein is 4-hydroxy-3-methylbut-2-enyl diphosphate reductase.